A 96-amino-acid polypeptide reads, in one-letter code: MSRVCELTGVSVQSGHNVSHSQRKTKRKFLPNLQNVSLFSDSLKKAFKFKVVARAIRTLDKVGGLDCYLLSASDKILSKFAIEVKKIIKNNGSKSS.

It belongs to the bacterial ribosomal protein bL28 family.

The protein is Large ribosomal subunit protein bL28 of Orientia tsutsugamushi (strain Boryong) (Rickettsia tsutsugamushi).